The sequence spans 137 residues: Altered inheritance of mitochondria protein 11 (137 aa).

2 consecutive transmembrane segments (helical) span residues 20–37 (YGAA…SRAI) and 66–88 (LTYA…CWAL).

The protein belongs to the AIM11 family.

The protein localises to the membrane. This Saccharomyces cerevisiae (strain RM11-1a) (Baker's yeast) protein is Altered inheritance of mitochondria protein 11 (AIM11).